Here is a 232-residue protein sequence, read N- to C-terminus: Ubiquinone biosynthesis O-methyltransferase (232 aa).

S-adenosyl-L-methionine-binding residues include Arg-36, Gly-55, Asp-76, and Leu-120.

It belongs to the methyltransferase superfamily. UbiG/COQ3 family.

The enzyme catalyses a 3-demethylubiquinol + S-adenosyl-L-methionine = a ubiquinol + S-adenosyl-L-homocysteine + H(+). The catalysed reaction is a 3-(all-trans-polyprenyl)benzene-1,2-diol + S-adenosyl-L-methionine = a 2-methoxy-6-(all-trans-polyprenyl)phenol + S-adenosyl-L-homocysteine + H(+). The protein operates within cofactor biosynthesis; ubiquinone biosynthesis. Its function is as follows. O-methyltransferase that catalyzes the 2 O-methylation steps in the ubiquinone biosynthetic pathway. The polypeptide is Ubiquinone biosynthesis O-methyltransferase (Pseudomonas savastanoi pv. phaseolicola (strain 1448A / Race 6) (Pseudomonas syringae pv. phaseolicola (strain 1448A / Race 6))).